We begin with the raw amino-acid sequence, 172 residues long: GTP-dependent dephospho-CoA kinase (172 aa).

GTP-binding residues include aspartate 49, valine 50, valine 51, aspartate 68, lysine 70, and glutamate 120.

Belongs to the GTP-dependent DPCK family.

The catalysed reaction is 3'-dephospho-CoA + GTP = GDP + CoA + H(+). The protein operates within cofactor biosynthesis; coenzyme A biosynthesis. Catalyzes the GTP-dependent phosphorylation of the 3'-hydroxyl group of dephosphocoenzyme A to form coenzyme A (CoA). The polypeptide is GTP-dependent dephospho-CoA kinase (Pyrobaculum arsenaticum (strain DSM 13514 / JCM 11321 / PZ6)).